We begin with the raw amino-acid sequence, 176 residues long: Large ribosomal subunit protein eL20 (176 aa).

Lys11 is covalently cross-linked (Glycyl lysine isopeptide (Lys-Gly) (interchain with G-Cter in SUMO2)). A Phosphotyrosine modification is found at Tyr63. The residue at position 71 (Ser71) is a Phosphoserine. N6-succinyllysine is present on Lys76. A Phosphoserine modification is found at Ser123. Residues Lys128 and Lys170 each participate in a glycyl lysine isopeptide (Lys-Gly) (interchain with G-Cter in SUMO2) cross-link.

Belongs to the eukaryotic ribosomal protein eL20 family. Component of the large ribosomal subunit. Binds IPO9 with high affinity.

It localises to the cytoplasm. Its function is as follows. Component of the large ribosomal subunit. The ribosome is a large ribonucleoprotein complex responsible for the synthesis of proteins in the cell. The protein is Large ribosomal subunit protein eL20 (RPL18A) of Bos taurus (Bovine).